Consider the following 289-residue polypeptide: Protease HtpX homolog (289 aa).

The next 2 helical transmembrane spans lie at 7-26 and 31-48; these read TAAL…YWVI and GLII…FSWY. Zn(2+) is bound at residue H132. The active site involves E133. H136 contacts Zn(2+). A run of 2 helical transmembrane segments spans residues 151 to 171 and 182 to 202; these read VAGA…FGGG and LGVL…QLAI. E207 contacts Zn(2+).

It belongs to the peptidase M48B family. Zn(2+) is required as a cofactor.

It is found in the cell inner membrane. This Nostoc punctiforme (strain ATCC 29133 / PCC 73102) protein is Protease HtpX homolog.